A 145-amino-acid chain; its full sequence is Bacilliredoxin MW1318 (145 aa).

Belongs to the bacilliredoxin family.

The sequence is that of Bacilliredoxin MW1318 from Staphylococcus aureus (strain MW2).